Reading from the N-terminus, the 121-residue chain is Met-lysine-1b (121 aa).

An N-terminal signal peptide occupies residues 1–22; it reads MKSFVFALALIVAFACISESKS. The propeptide occupies 23 to 69; sequence DHTGYEEEENLEDSELTDLVAAALLEELAEASEMDDLSYTEEAGGER. Methionine 120 carries the post-translational modification Methionine amide.

As to expression, expressed by the venom gland.

It localises to the secreted. Its function is as follows. Shows no antimicrobial activity against Gram-positive bacterium B.subtilis B-501 or Gram-negative bacterium E.coli DH5-alpha at concentrations up to 20 ug/ml. Shows no toxicity towards insect (S.carnaria) larvae. The polypeptide is Met-lysine-1b (Lachesana tarabaevi (Spider)).